The following is a 279-amino-acid chain: Methyltransferase ausD (279 aa).

Residues 124–125 and 152–153 each bind S-adenosyl-L-methionine; these read DI and DV.

It belongs to the class I-like SAM-binding methyltransferase superfamily. In terms of assembly, homodimer.

Its pathway is secondary metabolite biosynthesis; terpenoid biosynthesis. Functionally, methyltransferase; part of the gene cluster A that mediates the biosynthesis of the fungal meroterpenoid acetoxydehydroaustin. The first step of the pathway is the synthesis of 3,5-dimethylorsellinic acid by the polyketide synthase ausA. 3,5-dimethylorsellinic acid is then prenylated by the polyprenyl transferase ausN. Further epoxidation by the FAD-dependent monooxygenase ausM and cyclization by the probable terpene cyclase ausL lead to the formation of protoaustinoid A. Protoaustinoid A is then oxidized to spiro-lactone preaustinoid A3 by the combined action of the FAD-binding monooxygenases ausB and ausC, and the dioxygenase ausE. Acid-catalyzed keto-rearrangement and ring contraction of the tetraketide portion of preaustinoid A3 by ausJ lead to the formation of preaustinoid A4. The aldo-keto reductase ausK, with the help of ausH, is involved in the next step by transforming preaustinoid A4 into isoaustinone which is in turn hydroxylated by the P450 monooxygenase ausI to form austinolide. The cytochrome P450 monooxygenase ausG then modifies austinolide to austinol. Austinol is further acetylated to austin by the O-acetyltransferase ausP, which spontaneously changes to dehydroaustin. The cytochrome P450 monooxygenase then converts dehydroaustin is into 7-dehydrodehydroaustin. The hydroxylation catalyzed by ausR permits the second O-acetyltransferase ausQ to add an additional acetyl group to the molecule, leading to the formation of acetoxydehydroaustin. Due to genetic rearrangements of the clusters and the subsequent loss of some enzymes, the end product of the Penicillium brasilianum austinoid biosynthesis clusters is acetoxydehydroaustin. This Penicillium brasilianum protein is Methyltransferase ausD.